We begin with the raw amino-acid sequence, 543 residues long: Chaperonin GroEL (543 aa).

ATP contacts are provided by residues Thr30 to Pro33, Lys51, Asp87 to Thr91, Gly415, Asn480 to Leu482, and Asp496.

This sequence belongs to the chaperonin (HSP60) family. Forms a cylinder of 14 subunits composed of two heptameric rings stacked back-to-back. Interacts with the co-chaperonin GroES.

It localises to the cytoplasm. It carries out the reaction ATP + H2O + a folded polypeptide = ADP + phosphate + an unfolded polypeptide.. Together with its co-chaperonin GroES, plays an essential role in assisting protein folding. The GroEL-GroES system forms a nano-cage that allows encapsulation of the non-native substrate proteins and provides a physical environment optimized to promote and accelerate protein folding. This Gemmatimonas aurantiaca (strain DSM 14586 / JCM 11422 / NBRC 100505 / T-27) protein is Chaperonin GroEL.